The primary structure comprises 211 residues: Large ribosomal subunit protein uL3 (211 aa).

Belongs to the universal ribosomal protein uL3 family. Part of the 50S ribosomal subunit. Forms a cluster with proteins L14 and L19.

One of the primary rRNA binding proteins, it binds directly near the 3'-end of the 23S rRNA, where it nucleates assembly of the 50S subunit. This chain is Large ribosomal subunit protein uL3, found in Geotalea daltonii (strain DSM 22248 / JCM 15807 / FRC-32) (Geobacter daltonii).